A 341-amino-acid polypeptide reads, in one-letter code: MRVADFDYPLPEERIAKYPPLQRGSTRLLVICREGGTVSHARYRELDTFLRKGDLLVLNNTRVVKARLMAEKSTGAAIELMLLEKHGQEQSLVLFRGRVKQGDRLRSHGHEFLVEEIVDHGVARLSLPEGRSIQPVFEAHAEVPIPPYLRRPAEPVDRERYQTVFAEHAGSVAAPTASLNMTPELLLRLRDGGVETSSITLHVGLGTFLPIRVDSMEEHVMHREFYSIPAATIEKIRATKASGGRIIALGTTVTRALEHAALSLSGHSGPGPLEGEADIFIYPGCSFRLIDALLTNFHAPRSTVLMLTAAFAGPDLLRRAYREALDKEYRFLSYGDSTLIL.

Belongs to the QueA family. Monomer.

Its subcellular location is the cytoplasm. It catalyses the reaction 7-aminomethyl-7-carbaguanosine(34) in tRNA + S-adenosyl-L-methionine = epoxyqueuosine(34) in tRNA + adenine + L-methionine + 2 H(+). It functions in the pathway tRNA modification; tRNA-queuosine biosynthesis. Its function is as follows. Transfers and isomerizes the ribose moiety from AdoMet to the 7-aminomethyl group of 7-deazaguanine (preQ1-tRNA) to give epoxyqueuosine (oQ-tRNA). The chain is S-adenosylmethionine:tRNA ribosyltransferase-isomerase from Chlorobium luteolum (strain DSM 273 / BCRC 81028 / 2530) (Pelodictyon luteolum).